We begin with the raw amino-acid sequence, 134 residues long: Small ribosomal subunit protein bS6 (134 aa).

Positions 99–134 (EPSAMMQKRDRDERKDRERGRRRDDDGYVGERNEEG) are disordered. Basic and acidic residues predominate over residues 105-134 (QKRDRDERKDRERGRRRDDDGYVGERNEEG).

This sequence belongs to the bacterial ribosomal protein bS6 family.

Functionally, binds together with bS18 to 16S ribosomal RNA. The polypeptide is Small ribosomal subunit protein bS6 (Methylobacterium sp. (strain 4-46)).